The sequence spans 169 residues: Small ribosomal subunit protein uS5 (169 aa).

Positions 14–77 (LDDQVVAINR…AAAEKNLITV (64 aa)) constitute an S5 DRBM domain.

Belongs to the universal ribosomal protein uS5 family. Part of the 30S ribosomal subunit. Contacts proteins S4 and S8.

With S4 and S12 plays an important role in translational accuracy. Its function is as follows. Located at the back of the 30S subunit body where it stabilizes the conformation of the head with respect to the body. The chain is Small ribosomal subunit protein uS5 from Limosilactobacillus reuteri (strain DSM 20016) (Lactobacillus reuteri).